We begin with the raw amino-acid sequence, 442 residues long: tRNA modification GTPase MnmE (442 aa).

Residues arginine 21, glutamate 79, and lysine 118 each coordinate (6S)-5-formyl-5,6,7,8-tetrahydrofolate. The TrmE-type G domain occupies 215–365 (GLKIAIVGKP…LENKLSSYCN (151 aa)). GTP contacts are provided by residues 225–230 (NVGKSS), 244–250 (TNEAGTT), and 269–272 (DTAG). Residues serine 229 and threonine 250 each coordinate Mg(2+). Residue lysine 442 coordinates (6S)-5-formyl-5,6,7,8-tetrahydrofolate.

It belongs to the TRAFAC class TrmE-Era-EngA-EngB-Septin-like GTPase superfamily. TrmE GTPase family. As to quaternary structure, homodimer. Heterotetramer of two MnmE and two MnmG subunits. K(+) is required as a cofactor.

The protein resides in the cytoplasm. Its function is as follows. Exhibits a very high intrinsic GTPase hydrolysis rate. Involved in the addition of a carboxymethylaminomethyl (cmnm) group at the wobble position (U34) of certain tRNAs, forming tRNA-cmnm(5)s(2)U34. This Mycoplasma mobile (strain ATCC 43663 / 163K / NCTC 11711) (Mesomycoplasma mobile) protein is tRNA modification GTPase MnmE.